A 229-amino-acid polypeptide reads, in one-letter code: Potassium/proton antiporter CemA (229 aa).

Transmembrane regions (helical) follow at residues 7-27, 106-126, and 189-209; these read LTPF…SLSF, IVLH…YYFL, and IISG…KYWI.

The protein belongs to the CemA family.

Its subcellular location is the plastid. It localises to the chloroplast inner membrane. It catalyses the reaction K(+)(in) + H(+)(out) = K(+)(out) + H(+)(in). Its function is as follows. Contributes to K(+)/H(+) antiport activity by supporting proton efflux to control proton extrusion and homeostasis in chloroplasts in a light-dependent manner to modulate photosynthesis. Prevents excessive induction of non-photochemical quenching (NPQ) under continuous-light conditions. Indirectly promotes efficient inorganic carbon uptake into chloroplasts. The sequence is that of Potassium/proton antiporter CemA from Calycanthus floridus var. glaucus (Eastern sweetshrub).